The following is a 287-amino-acid chain: Ribonuclease Z (287 aa).

Zn(2+)-binding residues include histidine 64, histidine 66, aspartate 68, histidine 69, histidine 124, aspartate 191, and histidine 250. Catalysis depends on aspartate 68, which acts as the Proton acceptor.

It belongs to the RNase Z family. Homodimer. Zn(2+) serves as cofactor.

It catalyses the reaction Endonucleolytic cleavage of RNA, removing extra 3' nucleotides from tRNA precursor, generating 3' termini of tRNAs. A 3'-hydroxy group is left at the tRNA terminus and a 5'-phosphoryl group is left at the trailer molecule.. In terms of biological role, zinc phosphodiesterase, which displays some tRNA 3'-processing endonuclease activity. Probably involved in tRNA maturation, by removing a 3'-trailer from precursor tRNA. This chain is Ribonuclease Z, found in Pyrobaculum arsenaticum (strain DSM 13514 / JCM 11321 / PZ6).